The following is a 392-amino-acid chain: Formate-dependent phosphoribosylglycinamide formyltransferase (392 aa).

Residues 22–23 and glutamate 82 each bind N(1)-(5-phospho-beta-D-ribosyl)glycinamide; that span reads EL. ATP-binding positions include arginine 114, lysine 155, 160-165, 195-198, and glutamate 203; these read SSGKGQ and EGVV. One can recognise an ATP-grasp domain in the interval 119-308; it reads RLAAEELGLP…EFALHVRAFL (190 aa). 2 residues coordinate Mg(2+): glutamate 267 and glutamate 279. N(1)-(5-phospho-beta-D-ribosyl)glycinamide-binding positions include aspartate 286, lysine 355, and 362 to 363; that span reads RR.

It belongs to the PurK/PurT family. Homodimer.

It catalyses the reaction N(1)-(5-phospho-beta-D-ribosyl)glycinamide + formate + ATP = N(2)-formyl-N(1)-(5-phospho-beta-D-ribosyl)glycinamide + ADP + phosphate + H(+). It participates in purine metabolism; IMP biosynthesis via de novo pathway; N(2)-formyl-N(1)-(5-phospho-D-ribosyl)glycinamide from N(1)-(5-phospho-D-ribosyl)glycinamide (formate route): step 1/1. Functionally, involved in the de novo purine biosynthesis. Catalyzes the transfer of formate to 5-phospho-ribosyl-glycinamide (GAR), producing 5-phospho-ribosyl-N-formylglycinamide (FGAR). Formate is provided by PurU via hydrolysis of 10-formyl-tetrahydrofolate. The sequence is that of Formate-dependent phosphoribosylglycinamide formyltransferase from Salmonella paratyphi A (strain ATCC 9150 / SARB42).